The sequence spans 1380 residues: DNA-directed RNA polymerase subunit beta (1380 aa).

It belongs to the RNA polymerase beta chain family. The RNAP catalytic core consists of 2 alpha, 1 beta, 1 beta' and 1 omega subunit. When a sigma factor is associated with the core the holoenzyme is formed, which can initiate transcription.

It carries out the reaction RNA(n) + a ribonucleoside 5'-triphosphate = RNA(n+1) + diphosphate. DNA-dependent RNA polymerase catalyzes the transcription of DNA into RNA using the four ribonucleoside triphosphates as substrates. In Alcanivorax borkumensis (strain ATCC 700651 / DSM 11573 / NCIMB 13689 / SK2), this protein is DNA-directed RNA polymerase subunit beta.